A 370-amino-acid polypeptide reads, in one-letter code: Cyclic AMP-responsive element-binding protein 3-like protein 4 (370 aa).

The tract at residues 1-55 is required for transcriptional activation; the sequence is MELGCPELLEPPEDIFSTGSFLELGFNGPASKVPVTRGLQKSEPDDFLNLFIDPN. At 1–271 the chain is on the cytoplasmic side; it reads MELGCPELLE…QTSSRAAQTS (271 aa). The tract at residues 61–85 is disordered; that stretch reads ETSPGRDSGVSEDPGSPAQQASSSP. Positions 76-85 are enriched in low complexity; it reads SPAQQASSSP. Positions 193–256 constitute a bZIP domain; that stretch reads ILKKIRRKIR…IFLMEQVRQL (64 aa). The basic motif stretch occupies residues 195 to 234; that stretch reads KKIRRKIRNKQSAQDSRRRKKEYLDGLESRVAACSEQNQK. The interval 235–256 is leucine-zipper; the sequence is LQRKVQELERQNIFLMEQVRQL. Residues 272 to 292 form a helical; Signal-anchor for type II membrane protein membrane-spanning segment; that stretch reads TCVLILLFSLALIILPSFSPF. Residues 293–370 lie on the Lumenal side of the membrane; it reads QGQSEARPED…IRGMVHTDEM (78 aa). Residues asparagine 318 and asparagine 342 are each glycosylated (N-linked (GlcNAc...) asparagine).

This sequence belongs to the bZIP family. ATF subfamily. As to quaternary structure, binds DNA as a dimer. Forms a heterodimer with CREM isoform Tau. Controlled by regulated intramembrane proteolysis (RIP). Following ER stress a fragment containing the cytoplasmic transcription factor domain is released by proteolysis. The cleavage seems to be performed sequentially by site-1 and site-2 proteases (PS1 and PS2). PS1 cleavage may be suppressed by a determinant in the C-terminal region. Predominantly expressed at high levels in testis with isoform 2 being the predominant isoform. Specifically expressed in postmeiotic spermatids and accumulates in the mid/late stage (at protein level). Ubiquitously expressed at low levels.

It localises to the endoplasmic reticulum membrane. Its subcellular location is the cytoplasmic vesicle. The protein resides in the secretory vesicle. The protein localises to the acrosome inner membrane. It is found in the nucleus. Transcriptional activator that may play a role in the unfolded protein response of the testis. Proposed to be involved in spermiogenesis. May be involved in regulating the maturation of sperm head nuclei. Alternatively proposed to be a paternally delivered transcription factor that may function in early zygotic gene activation. Increases the binding of CREM isoform Tau with CRE. The CREM isoform Tau-CREB3L4 heterodimer functions through CRE but not through UPRE and may recruit HIRA to CRE to regulate histone exchange. In Mus musculus (Mouse), this protein is Cyclic AMP-responsive element-binding protein 3-like protein 4 (Creb3l4).